A 145-amino-acid chain; its full sequence is Protein BUD31 homolog 2 (145 aa).

The protein belongs to the BUD31 (G10) family.

It is found in the nucleus. The protein is Protein BUD31 homolog 2 of Oryza sativa subsp. japonica (Rice).